The chain runs to 324 residues: Calmodulin-like protein 12 (324 aa).

6 EF-hand domains span residues 8–43 (DQIT…IGEK), 44–79 (PTKA…NQGH), 97–132 (DQIT…LGKN), 133–168 (RTKA…NQGH), 187–222 (DQIL…LGET), and 223–258 (QTKA…KMID). The Ca(2+) site is built by Asp21, Asn23, Asp25, Ser27, Glu32, Asp57, Asp59, Asp61, Thr63, Glu68, Asp110, Asn112, Asp114, Ser116, Glu121, Asp146, Asp148, Asp150, Thr152, Glu157, Asp200, Asn202, Asp204, Tyr206, Glu211, Asp236, Asp238, Asp240, Thr242, and Glu247.

Belongs to the calmodulin family. In terms of assembly, interacts with PID. Binds to ABCG36.

Functionally, potential calcium sensor that binds calcium in vitro. In Arabidopsis thaliana (Mouse-ear cress), this protein is Calmodulin-like protein 12.